Consider the following 512-residue polypeptide: ADP,ATP carrier protein 4 (512 aa).

12 consecutive transmembrane segments (helical) span residues I34 to I54, I71 to V91, I102 to F122, F157 to W177, F192 to E212, F231 to I251, L296 to K316, A330 to L350, F361 to F381, L390 to I410, V448 to I468, and S476 to T496.

Belongs to the ADP/ATP translocase tlc family.

Its subcellular location is the cell membrane. Its function is as follows. Provides the rickettsial cell with host ATP in exchange for rickettsial ADP. This is an obligate exchange system. This energy acquiring activity is an important component of rickettsial parasitism. The protein is ADP,ATP carrier protein 4 (tlcD) of Rickettsia typhi (strain ATCC VR-144 / Wilmington).